Reading from the N-terminus, the 185-residue chain is Crossover junction endodeoxyribonuclease RuvC (185 aa).

Residues Asp-16, Glu-75, and Asp-147 contribute to the active site. Residues Asp-16, Glu-75, and Asp-147 each coordinate Mg(2+).

This sequence belongs to the RuvC family. As to quaternary structure, homodimer which binds Holliday junction (HJ) DNA. The HJ becomes 2-fold symmetrical on binding to RuvC with unstacked arms; it has a different conformation from HJ DNA in complex with RuvA. In the full resolvosome a probable DNA-RuvA(4)-RuvB(12)-RuvC(2) complex forms which resolves the HJ. It depends on Mg(2+) as a cofactor.

Its subcellular location is the cytoplasm. It carries out the reaction Endonucleolytic cleavage at a junction such as a reciprocal single-stranded crossover between two homologous DNA duplexes (Holliday junction).. In terms of biological role, the RuvA-RuvB-RuvC complex processes Holliday junction (HJ) DNA during genetic recombination and DNA repair. Endonuclease that resolves HJ intermediates. Cleaves cruciform DNA by making single-stranded nicks across the HJ at symmetrical positions within the homologous arms, yielding a 5'-phosphate and a 3'-hydroxyl group; requires a central core of homology in the junction. The consensus cleavage sequence is 5'-(A/T)TT(C/G)-3'. Cleavage occurs on the 3'-side of the TT dinucleotide at the point of strand exchange. HJ branch migration catalyzed by RuvA-RuvB allows RuvC to scan DNA until it finds its consensus sequence, where it cleaves and resolves the cruciform DNA. The polypeptide is Crossover junction endodeoxyribonuclease RuvC (Aromatoleum aromaticum (strain DSM 19018 / LMG 30748 / EbN1) (Azoarcus sp. (strain EbN1))).